Consider the following 218-residue polypeptide: MAYPGYGGGFGNFSIQVPGMQMGQPVPETGPGILLDGYSGCPAFSDTYSSAGDSVYTYFSAVAGQDGEVDAEELQRCLTQSGISGTYSPFSLETCRIMIAMLDRDYTGKMGFNAFKELWSALNAWKENFMTVDQDGSGTVEHHELRQAIGLMGYRLSPQTLTTIVKRYSKNGRIFFDDYVACCVKLRALTDFFRKRDHLQQGSANFIYDDFLQGTMAI.

4 EF-hand domains span residues 49-84 (SSAG…SGIS), 85-119 (GTYS…KELW), 120-155 (SALN…MGYR), and 156-191 (LSPQ…ALTD). Residues Asp103, Asp105, Thr107, Lys109, Asp133, Asp135, Ser137, Thr139, and Glu144 each coordinate Ca(2+).

In terms of assembly, homodimer. Interacts with SRI and LCP1.

Its subcellular location is the cytoplasm. It is found in the cytoplasmic granule membrane. In terms of biological role, calcium-binding protein that may play a role in the adhesion of neutrophils to fibronectin. May play a role in the formation of focal adhesions. This is Grancalcin (GCA) from Pongo abelii (Sumatran orangutan).